Here is a 63-residue protein sequence, read N- to C-terminus: Ct-IT2 (63 aa).

An LCN-type CS-alpha/beta domain is found at 1 to 63 (KDGYPMDSKG…VWDKATNKCG (63 aa)). Cystine bridges form between Cys-11–Cys-62, Cys-15–Cys-36, Cys-22–Cys-43, and Cys-26–Cys-45. The residue at position 63 (Gly-63) is a Glycine amide.

In terms of tissue distribution, expressed by the venom gland.

The protein resides in the secreted. Beta toxins bind voltage-independently at site-4 of sodium channels (Nav) and shift the voltage of activation toward more negative potentials thereby affecting sodium channel activation and promoting spontaneous and repetitive firing. Is highly active on insects, since it provokes paralysis and death when injected into crickets. The chain is Ct-IT2 from Centruroides tecomanus (Scorpion).